Reading from the N-terminus, the 131-residue chain is Ribosome-binding factor A (131 aa).

It belongs to the RbfA family. As to quaternary structure, monomer. Binds 30S ribosomal subunits, but not 50S ribosomal subunits or 70S ribosomes.

The protein localises to the cytoplasm. In terms of biological role, one of several proteins that assist in the late maturation steps of the functional core of the 30S ribosomal subunit. Associates with free 30S ribosomal subunits (but not with 30S subunits that are part of 70S ribosomes or polysomes). Required for efficient processing of 16S rRNA. May interact with the 5'-terminal helix region of 16S rRNA. The chain is Ribosome-binding factor A from Gloeothece citriformis (strain PCC 7424) (Cyanothece sp. (strain PCC 7424)).